The following is a 396-amino-acid chain: Elongation factor Tu (396 aa).

Positions 10 to 206 (KPHCNIGTIG…AVDAYIPQPE (197 aa)) constitute a tr-type G domain. The segment at 19–26 (GHVDHGKT) is G1. 19-26 (GHVDHGKT) contacts GTP. Thr26 provides a ligand contact to Mg(2+). Positions 60–64 (GITIS) are G2. The G3 stretch occupies residues 81–84 (DCPG). Residues 81-85 (DCPGH) and 136-139 (NKVD) contribute to the GTP site. Residues 136 to 139 (NKVD) form a G4 region. Positions 174 to 176 (SAL) are G5.

It belongs to the TRAFAC class translation factor GTPase superfamily. Classic translation factor GTPase family. EF-Tu/EF-1A subfamily. In terms of assembly, monomer.

The protein localises to the cytoplasm. It catalyses the reaction GTP + H2O = GDP + phosphate + H(+). In terms of biological role, GTP hydrolase that promotes the GTP-dependent binding of aminoacyl-tRNA to the A-site of ribosomes during protein biosynthesis. The polypeptide is Elongation factor Tu (Gluconacetobacter diazotrophicus (strain ATCC 49037 / DSM 5601 / CCUG 37298 / CIP 103539 / LMG 7603 / PAl5)).